The chain runs to 350 residues: Sterol-4-alpha-carboxylate 3-dehydrogenase ERG26, decarboxylating (350 aa).

Residues 12-18 (GGSGFLG), 63-64 (DL), and 85-87 (SAS) contribute to the NADP(+) site. The substrate site is built by Ser-125 and Tyr-152. NADP(+)-binding positions include Tyr-152, Lys-156, and 179–182 (PAGI). Lys-156 serves as the catalytic Proton donor.

It belongs to the 3-beta-HSD family. In terms of assembly, heterotetramer of ERG25, ERG26, ERG27 and ERG28. ERG28 acts as a scaffold to tether ERG27 and other 4,4-demethylation-related enzymes, forming a demethylation enzyme complex, in the endoplasmic reticulum.

Its subcellular location is the endoplasmic reticulum membrane. It carries out the reaction 4beta-methylzymosterol-4alpha-carboxylate + NADP(+) = 3-dehydro-4-methylzymosterol + CO2 + NADPH. Its pathway is steroid biosynthesis; zymosterol biosynthesis; zymosterol from lanosterol: step 4/6. In terms of biological role, sterol-4-alpha-carboxylate 3-dehydrogenase; part of the third module of ergosterol biosynthesis pathway that includes the late steps of the pathway. ERG26 is a catalytic component of the C-4 demethylation complex that catalyzes the oxidative decarboxylation that results in a reduction of the 3-beta-hydroxy group at the C-3 carbon to an oxo group. The third module or late pathway involves the ergosterol synthesis itself through consecutive reactions that mainly occur in the endoplasmic reticulum (ER) membrane. Firstly, the squalene synthase ERG9 catalyzes the condensation of 2 farnesyl pyrophosphate moieties to form squalene, which is the precursor of all steroids. Squalene synthase is crucial for balancing the incorporation of farnesyl diphosphate (FPP) into sterol and nonsterol isoprene synthesis. Secondly, the squalene epoxidase ERG1 catalyzes the stereospecific oxidation of squalene to (S)-2,3-epoxysqualene, which is considered to be a rate-limiting enzyme in steroid biosynthesis. Then, the lanosterol synthase ERG7 catalyzes the cyclization of (S)-2,3 oxidosqualene to lanosterol, a reaction that forms the sterol core. In the next steps, lanosterol is transformed to zymosterol through a complex process involving various demethylation, reduction and desaturation reactions. The lanosterol 14-alpha-demethylase ERG11 (also known as CYP51) catalyzes C14-demethylation of lanosterol to produce 4,4'-dimethyl cholesta-8,14,24-triene-3-beta-ol, which is critical for ergosterol biosynthesis. The C-14 reductase ERG24 reduces the C14=C15 double bond of 4,4-dimethyl-cholesta-8,14,24-trienol to produce 4,4-dimethyl-cholesta-8,24-dienol. 4,4-dimethyl-cholesta-8,24-dienol is substrate of the C-4 demethylation complex ERG25-ERG26-ERG27 in which ERG25 catalyzes the three-step monooxygenation required for the demethylation of 4,4-dimethyl and 4alpha-methylsterols, ERG26 catalyzes the oxidative decarboxylation that results in a reduction of the 3-beta-hydroxy group at the C-3 carbon to an oxo group, and ERG27 is responsible for the reduction of the keto group on the C-3. ERG28 has a role as a scaffold to help anchor ERG25, ERG26 and ERG27 to the endoplasmic reticulum and ERG29 regulates the activity of the iron-containing C4-methylsterol oxidase ERG25. Then, the sterol 24-C-methyltransferase ERG6 catalyzes the methyl transfer from S-adenosyl-methionine to the C-24 of zymosterol to form fecosterol. The C-8 sterol isomerase ERG2 catalyzes the reaction which results in unsaturation at C-7 in the B ring of sterols and thus converts fecosterol to episterol. The sterol-C5-desaturase ERG3 then catalyzes the introduction of a C-5 double bond in the B ring to produce 5-dehydroepisterol. The C-22 sterol desaturase ERG5 further converts 5-dehydroepisterol into ergosta-5,7,22,24(28)-tetraen-3beta-ol by forming the C-22(23) double bond in the sterol side chain. Finally, ergosta-5,7,22,24(28)-tetraen-3beta-ol is substrate of the C-24(28) sterol reductase ERG4 to produce ergosterol. The chain is Sterol-4-alpha-carboxylate 3-dehydrogenase ERG26, decarboxylating from Candida albicans (strain SC5314 / ATCC MYA-2876) (Yeast).